Here is a 90-residue protein sequence, read N- to C-terminus: DNA/RNA-binding protein Alba (90 aa).

Position 8 is an N6-acetyllysine (Lys-8).

This sequence belongs to the histone-like Alba family. In terms of processing, acetylated. Acetylation at Lys-8 decreases DNA-binding affinity.

It is found in the cytoplasm. Its subcellular location is the chromosome. Binds double-stranded DNA tightly but without sequence specificity. Involved in DNA compaction. The chain is DNA/RNA-binding protein Alba from Nanoarchaeum equitans (strain Kin4-M).